A 142-amino-acid chain; its full sequence is Probable transport accessory protein MmpS5 (142 aa).

Residues 7 to 26 (RAWIPLLILVVVAIAGFTVQ) traverse the membrane as a helical segment.

It belongs to the MmpS family.

Its subcellular location is the cell membrane. This chain is Probable transport accessory protein MmpS5 (mmpS5), found in Mycobacterium bovis (strain ATCC BAA-935 / AF2122/97).